We begin with the raw amino-acid sequence, 285 residues long: Polyamine aminopropyltransferase (285 aa).

The PABS domain maps to 5-241 (DNWYIEHFQP…GWWSVTMASK (237 aa)). Position 35 (Gln-35) interacts with S-methyl-5'-thioadenosine. The spermidine site is built by His-66 and Asp-90. S-methyl-5'-thioadenosine is bound by residues Asp-110 and 141–142 (DG). Asp-160 acts as the Proton acceptor in catalysis. 160–163 (DSTD) is a spermidine binding site. Pro-167 provides a ligand contact to S-methyl-5'-thioadenosine.

This sequence belongs to the spermidine/spermine synthase family. As to quaternary structure, homodimer or homotetramer.

It is found in the cytoplasm. It catalyses the reaction S-adenosyl 3-(methylsulfanyl)propylamine + putrescine = S-methyl-5'-thioadenosine + spermidine + H(+). Its pathway is amine and polyamine biosynthesis; spermidine biosynthesis; spermidine from putrescine: step 1/1. Functionally, catalyzes the irreversible transfer of a propylamine group from the amino donor S-adenosylmethioninamine (decarboxy-AdoMet) to putrescine (1,4-diaminobutane) to yield spermidine. The chain is Polyamine aminopropyltransferase from Xanthomonas euvesicatoria pv. vesicatoria (strain 85-10) (Xanthomonas campestris pv. vesicatoria).